Reading from the N-terminus, the 107-residue chain is MGKLTLLLLILLGWLQYSLWLGKNGVHDFVRVKDDVALQEVNNGKLKARNDQLFAEIDDLNGGQEAIEERARNELGMIKPGESFYRLVPDQSRRNASIPSTQNNAQQ.

Over 1–3 (MGK) the chain is Cytoplasmic. The helical transmembrane segment at 4 to 21 (LTLLLLILLGWLQYSLWL) threads the bilayer. The Periplasmic segment spans residues 22–107 (GKNGVHDFVR…IPSTQNNAQQ (86 aa)). The stretch at 39-62 (QEVNNGKLKARNDQLFAEIDDLNG) forms a coiled coil.

Belongs to the FtsB family. In terms of assembly, part of a complex composed of FtsB, FtsL and FtsQ.

It localises to the cell inner membrane. Its function is as follows. Essential cell division protein. May link together the upstream cell division proteins, which are predominantly cytoplasmic, with the downstream cell division proteins, which are predominantly periplasmic. This chain is Cell division protein FtsB, found in Yersinia enterocolitica serotype O:8 / biotype 1B (strain NCTC 13174 / 8081).